Reading from the N-terminus, the 513-residue chain is Aspartic proteinase A2 (513 aa).

The first 24 residues, 1–24, serve as a signal peptide directing secretion; the sequence is MGVYSRAVAFSVFVSFLLFFTAYS. Residues 25 to 71 constitute a propeptide, activation peptide; the sequence is KRNDGTFRVGLKKLKLDPNNRLATRFGSKQEEALRSSLRSYNNNLGG. The region spanning 89-510 is the Peptidase A1 domain; that stretch reads YYGEIAIGTP…DFGNEQVGFA (422 aa). Aspartate 107 is a catalytic residue. Intrachain disulfides connect cysteine 120/cysteine 126 and cysteine 285/cysteine 289. Residue aspartate 294 is part of the active site. In terms of domain architecture, Saposin B-type spans 319–424; that stretch reads VVSQQCKTVV…NEICERMPSP (106 aa). Disulfide bonds link cysteine 324/cysteine 418, cysteine 349/cysteine 390, cysteine 355/cysteine 387, and cysteine 432/cysteine 469. Residue asparagine 404 is glycosylated (N-linked (GlcNAc...) asparagine).

It belongs to the peptidase A1 family. In terms of tissue distribution, expressed in seed pods and dry seeds.

It is found in the vacuole. In terms of biological role, involved in the breakdown of propeptides of storage proteins in protein-storage vacuoles. This chain is Aspartic proteinase A2 (APA2), found in Arabidopsis thaliana (Mouse-ear cress).